Here is a 188-residue protein sequence, read N- to C-terminus: Large ribosomal subunit protein uL6 (188 aa).

The protein belongs to the universal ribosomal protein uL6 family. As to quaternary structure, part of the 50S ribosomal subunit.

Functionally, this protein binds to the 23S rRNA, and is important in its secondary structure. It is located near the subunit interface in the base of the L7/L12 stalk, and near the tRNA binding site of the peptidyltransferase center. The sequence is that of Large ribosomal subunit protein uL6 from Myxococcus xanthus (strain DK1622).